The sequence spans 150 residues: Urease accessory protein UreE (150 aa).

The protein belongs to the UreE family.

It localises to the cytoplasm. Functionally, involved in urease metallocenter assembly. Binds nickel. Probably functions as a nickel donor during metallocenter assembly. The polypeptide is Urease accessory protein UreE (Staphylococcus carnosus (strain TM300)).